A 317-amino-acid chain; its full sequence is Melanocyte-stimulating hormone receptor (317 aa).

Over 1–37 (MPVLGSQRRLLGSLNCTPPATLPLTLAPNRTGPQCLE) the chain is Extracellular. N-linked (GlcNAc...) asparagine glycosylation occurs at Asn-29. Residues 38–63 (VSIPDGLFLSLGLVSLVENVLVVAAI) traverse the membrane as a helical segment. The Cytoplasmic segment spans residues 64-72 (AKNRNLHSP). A helical membrane pass occupies residues 73-93 (MYYFICCLAMSDLLVSVSNVL). The Extracellular portion of the chain corresponds to 94–118 (ETAVMLLLEAGVLATRAAVVQQLDN). A helical membrane pass occupies residues 119 to 140 (VIDVLICSSMVSSLCFLGAIAV). At 141 to 163 (DRYISIFYALRYHSVVTLPRAWR) the chain is on the cytoplasmic side. A helical membrane pass occupies residues 164–183 (IIAAIWVASILTSVLSITYY). At 184 to 191 (NHTVVLLC) the chain is on the extracellular side. The helical transmembrane segment at 192-211 (LVGFFIAMLALMAVLYVHML) threads the bilayer. Over 212 to 240 (ARACQHARGIARLQKRQRPIHQGFGLKGA) the chain is Cytoplasmic. Residues 241–266 (ATLTILLGVFFLCWGPFFLHLSLIVL) form a helical membrane-spanning segment. Residues 267–279 (CPQHPTCGCIFKN) lie on the Extracellular side of the membrane. A helical membrane pass occupies residues 280-300 (FNLFLALIICNAIVDPLIYAF). The Cytoplasmic portion of the chain corresponds to 301-317 (RSQELRKTLQEVLQCSW). Cys-315 carries S-palmitoyl cysteine lipidation.

The protein belongs to the G-protein coupled receptor 1 family. Interacts with MGRN1, but does not undergo MGRN1-mediated ubiquitination; this interaction competes with GNAS-binding and thus inhibits agonist-induced cAMP production. Interacts with OPN3; the interaction results in a decrease in MC1R-mediated cAMP signaling and ultimately a decrease in melanin production in melanocytes.

The protein localises to the cell membrane. Its function is as follows. Receptor for MSH (alpha, beta and gamma) and ACTH. The activity of this receptor is mediated by G proteins which activate adenylate cyclase. Mediates melanogenesis, the production of eumelanin (black/brown) and phaeomelanin (red/yellow), via regulation of cAMP signaling in melanocytes. This chain is Melanocyte-stimulating hormone receptor (MC1R), found in Ovis aries (Sheep).